We begin with the raw amino-acid sequence, 648 residues long: SRSF protein kinase 1 (648 aa).

A disordered region spans residues 1–57 (MERKVLALQARKKRTKAKKDKAQRKPETQHRGSAPHSESDIPEQEEEILGSDDDEQE). The span at 10 to 22 (ARKKRTKAKKDKA) shows a compositional bias: basic residues. The span at 40 to 57 (DIPEQEEEILGSDDDEQE) shows a compositional bias: acidic residues. At Ser51 the chain carries Phosphoserine. One can recognise a Protein kinase domain in the interval 80–646 (YHVIRKLGWG…AAECLRHPWL (567 aa)). Residues 86–94 (LGWGHFSTV) and Lys109 each bind ATP. Asp213 acts as the Proton acceptor in catalysis. Disordered regions lie at residues 238 to 354 (WQRS…APEI) and 395 to 464 (PSFL…DSKG). Basic residues predominate over residues 265–276 (KNKKKKLKKKQK). Basic and acidic residues-rich tracts occupy residues 277–288 (RQAELLEKRMQE) and 304–317 (NKQE…DRPL). Residues Ser309, Ser311, and Ser333 each carry the phosphoserine modification. 2 stretches are compositionally biased toward polar residues: residues 333-343 (SNSIGQDQTLT) and 396-441 (SFLN…TQLE). A Phosphothreonine modification is found at Thr448. At Ser450 the chain carries Phosphoserine. The residue at position 548 (Ser548) is a Phosphoserine; by CK2.

This sequence belongs to the protein kinase superfamily. CMGC Ser/Thr protein kinase family. Monomer. Found in a multisubunit complex containing seven proteins, named toposome, which separates entangled circular chromatin DNA during chromosome segregation. Interacts with HHV-1 ICP27 protein. Interacts with DNAJC8 and AHSA1/AHA1 and this mediates formation of a complex with the Hsp70 /Hsp90 machinery. Binds to IGF2BP1, SYNCRIP, HNRNPA2B1 and HNRNPC. Interacts with SAFB/SAFB1 and SAFB2 which inhibits its activity. Mg(2+) serves as cofactor. Predominantly expressed in the testis but is also present at lower levels in heart, spleen, liver, brain, kidney, lung and skeletal muscle. Present in all germinal cells in the seminiferous tubules but not in mature spermatozoa.

It localises to the cytoplasm. The protein localises to the nucleus. It is found in the nucleoplasm. The protein resides in the nucleus matrix. Its subcellular location is the microsome. It localises to the nucleus speckle. The protein localises to the chromosome. It catalyses the reaction L-seryl-[protein] + ATP = O-phospho-L-seryl-[protein] + ADP + H(+). The enzyme catalyses L-threonyl-[protein] + ATP = O-phospho-L-threonyl-[protein] + ADP + H(+). Its activity is regulated as follows. Activated by phosphorylation on Ser-51 and Ser-548. In terms of biological role, serine/arginine-rich protein-specific kinase which specifically phosphorylates its substrates at serine residues located in regions rich in arginine/serine dipeptides, known as RS domains and is involved in the phosphorylation of SR splicing factors and the regulation of splicing. Plays a central role in the regulatory network for splicing, controlling the intranuclear distribution of splicing factors in interphase cells and the reorganization of nuclear speckles during mitosis. Can influence additional steps of mRNA maturation, as well as other cellular activities, such as chromatin reorganization in somatic and sperm cells and cell cycle progression. Phosphorylates SFRS2, ZRSR2, LBR and PRM1. Phosphorylates SRSF1 using a directional (C-terminal to N-terminal) and a dual-track mechanism incorporating both processive phosphorylation (in which the kinase stays attached to the substrate after each round of phosphorylation) and distributive phosphorylation steps (in which the kinase and substrate dissociate after each phosphorylation event). The RS domain of SRSF1 binds first to a docking groove in the large lobe of the kinase domain of SRPK1. This induces certain structural changes in SRPK1 and/or RRM2 domain of SRSF1, allowing RRM2 to bind the kinase and initiate phosphorylation. The cycles continue for several phosphorylation steps in a processive manner (steps 1-8) until the last few phosphorylation steps (approximately steps 9-12). During that time, a mechanical stress induces the unfolding of the beta-4 motif in RRM2, which then docks at the docking groove of SRPK1. This also signals RRM2 to begin to dissociate, which facilitates SRSF1 dissociation after phosphorylation is completed. Can mediate hepatitis B virus (HBV) core protein phosphorylation. It plays a negative role in the regulation of HBV replication through a mechanism not involving the phosphorylation of the core protein but by reducing the packaging efficiency of the pregenomic RNA (pgRNA) without affecting the formation of the viral core particles. Can induce splicing of exon 10 in MAPT/TAU. The sequence is that of SRSF protein kinase 1 from Mus musculus (Mouse).